Reading from the N-terminus, the 251-residue chain is tRNA1(Val) (adenine(37)-N6)-methyltransferase (251 aa).

Belongs to the methyltransferase superfamily. tRNA (adenine-N(6)-)-methyltransferase family.

It localises to the cytoplasm. It catalyses the reaction adenosine(37) in tRNA1(Val) + S-adenosyl-L-methionine = N(6)-methyladenosine(37) in tRNA1(Val) + S-adenosyl-L-homocysteine + H(+). Its function is as follows. Specifically methylates the adenine in position 37 of tRNA(1)(Val) (anticodon cmo5UAC). This Shewanella frigidimarina (strain NCIMB 400) protein is tRNA1(Val) (adenine(37)-N6)-methyltransferase.